The sequence spans 99 residues: Malonate decarboxylase acyl carrier protein (99 aa).

Serine 25 carries the post-translational modification O-(phosphoribosyl dephospho-coenzyme A)serine.

It belongs to the MdcC family. Covalently binds the prosthetic group of malonate decarboxylase.

It localises to the cytoplasm. Its function is as follows. Subunit of malonate decarboxylase, it is an acyl carrier protein to which acetyl and malonyl thioester residues are bound via a 2'-(5''-phosphoribosyl)-3'-dephospho-CoA prosthetic group and turn over during the catalytic mechanism. This is Malonate decarboxylase acyl carrier protein from Pseudomonas syringae pv. syringae (strain B728a).